A 469-amino-acid chain; its full sequence is GTPase Der (469 aa).

EngA-type G domains follow at residues 30–193 and 203–376; these read PVLA…PEVA and RRVA…ASWD. GTP is bound by residues 36–43, 83–87, 145–148, 209–216, 256–260, and 321–324; these read GRPNVGKS, DTGGW, NKVD, GKPNVGKS, DTAGL, and NKWD. The KH-like domain maps to 377-459; the sequence is TRIPTGPLNS…PIRINVRVRE (83 aa).

This sequence belongs to the TRAFAC class TrmE-Era-EngA-EngB-Septin-like GTPase superfamily. EngA (Der) GTPase family. As to quaternary structure, associates with the 50S ribosomal subunit.

In terms of biological role, GTPase that plays an essential role in the late steps of ribosome biogenesis. The protein is GTPase Der of Mycobacterium marinum (strain ATCC BAA-535 / M).